A 298-amino-acid chain; its full sequence is Probable alpha-L-glutamate ligase (298 aa).

The ATP-grasp domain occupies 104–287 (MQLLSRHGIG…VAGKIIEFLE (184 aa)). Residues Lys-141, 178 to 179 (EY), Asp-187, and 211 to 213 (RSN) contribute to the ATP site. Residues Asp-248, Glu-260, and Asn-262 each contribute to the Mg(2+) site. Residues Asp-248, Glu-260, and Asn-262 each contribute to the Mn(2+) site.

The protein belongs to the RimK family. Requires Mg(2+) as cofactor. Mn(2+) serves as cofactor.

This chain is Probable alpha-L-glutamate ligase, found in Aeromonas salmonicida (strain A449).